The primary structure comprises 806 residues: Breast cancer anti-estrogen resistance protein 3 homolog (806 aa).

The SH2 domain occupies 152–251; the sequence is WYHGRIPRQV…QSGAIIFQPI (100 aa). 2 disordered regions span residues 308 to 343 and 390 to 412; these read RNKE…PLGS and RGSD…SIKQ. Positions 538 to 805 constitute a Ras-GEF domain; that stretch reads DPRTIAKHIL…TALSRKLEPP (268 aa).

Functionally, may act as an adapter protein. The chain is Breast cancer anti-estrogen resistance protein 3 homolog (bcar3) from Xenopus laevis (African clawed frog).